A 384-amino-acid polypeptide reads, in one-letter code: Cell adhesion molecule CEACAM18 (384 aa).

A signal peptide spans 1–30 (MDLSRPRWSLWRRVFLMASLLACGICQASG). N108, N112, N121, N162, and N270 each carry an N-linked (GlcNAc...) asparagine glycan. The Ig-like C2-type domain maps to 227–314 (PDYVLLRSNP…LIMYMDVRIQ (88 aa)). The cysteines at positions 255 and 296 are disulfide-linked. Positions 358-384 (QPLLNQDKSGSMSVHPRPEDKTRRASR) are disordered. Over residues 359-369 (PLLNQDKSGSM) the composition is skewed to polar residues. Basic and acidic residues predominate over residues 373 to 384 (PRPEDKTRRASR).

This sequence belongs to the immunoglobulin superfamily. CEA family.

The protein is Cell adhesion molecule CEACAM18 of Homo sapiens (Human).